The sequence spans 347 residues: Vitellogenin-3 (347 aa).

Positions 1-15 are cleaved as a signal peptide; it reads MRGFILALVLALVGA. N80 carries N-linked (GlcNAc...) asparagine glycosylation. Positions 104–118 are enriched in low complexity; sequence PSATPLSSSSSTDSS. Disordered stretches follow at residues 104–174 and 200–234; these read PSAT…DKHC and QDPR…MFLG. The segment covering 124–133 has biased composition (basic and acidic residues); sequence PGNKRDKDEI. Over residues 144–163 the composition is skewed to low complexity; sequence SSSSSSSSSTGSGSSKTCSS. Positions 164-174 are enriched in basic and acidic residues; sequence SREDSSRDKHC. N208 carries N-linked (GlcNAc...) asparagine glycosylation. Over residues 209-219 the composition is skewed to low complexity; it reads SSISSSSSSSS.

Phosvitin, an egg yolk storage protein, is one of the most highly phosphorylated (10%) proteins in nature. Post-translationally, cathepsin D is responsible for intraoocytic processing of vitellogenin. In terms of processing, may contain intrachain disulfide bonds. In terms of tissue distribution, produced by the liver, secreted into the blood and then sequestered by receptor mediated endocytosis into growing oocytes, where it is generally cleaved, giving rise to the respective yolk components.

In terms of biological role, precursor of the egg-yolk proteins that are sources of nutrients during early development of oviparous organisms. Phosvitin is believed to be of importance in sequestering calcium, iron and other cations for the developing embryo. In Gallus gallus (Chicken), this protein is Vitellogenin-3 (VTG3).